A 118-amino-acid chain; its full sequence is HTH-type transcriptional regulator CmtR (118 aa).

One can recognise an HTH arsR-type domain in the interval 3 to 97 (TCEMRESALA…ELVQVVLAVD (95 aa)). 3 residues coordinate Cd(2+): C57, C61, and C102.

Homodimer.

Its function is as follows. Metal-responsive transcriptional repressor for the cmt operon. Binding of cadmium or lead causes the repressor to dissociate from the DNA. This Mycobacterium bovis (strain ATCC BAA-935 / AF2122/97) protein is HTH-type transcriptional regulator CmtR (cmtR).